Reading from the N-terminus, the 511-residue chain is Glucans biosynthesis protein G (511 aa).

The first 22 residues, 1–22 (MMKMRWLSAAVMLTLYTSSSWA), serve as a signal peptide directing secretion.

It belongs to the OpgD/OpgG family.

It is found in the periplasm. Its pathway is glycan metabolism; osmoregulated periplasmic glucan (OPG) biosynthesis. Its function is as follows. Involved in the biosynthesis of osmoregulated periplasmic glucans (OPGs). The polypeptide is Glucans biosynthesis protein G (Escherichia fergusonii (strain ATCC 35469 / DSM 13698 / CCUG 18766 / IAM 14443 / JCM 21226 / LMG 7866 / NBRC 102419 / NCTC 12128 / CDC 0568-73)).